The sequence spans 493 residues: MTVFSGVNKIEFEGTFEGIGKDVVMSQMIRALQKHFPSIRDKNYEFSLFLHIFQRYVLENTSITHDLVCDKIRLPIIDEVVELDDIKNYGLLEGKLLSKLAILKLTGKANPIIGKESPLFEVKNGMSSLDVIVRQTQNLNVRYNSDVPLIFMTSLETESQVSNFLEEHYSSSKVRWKTVVQSSFPQIDKDRLLPIDLQINSHENDFWYPCGTGNLTDTLYFSGELDKLIAQGKEILFVSNVDNLGATGDLNILNFIINEKIEYLVEVVERTANVSNTGVLATYKGKLRSVYYNCLSNESASTCRIVNTNNIWIDLKKLKVLIESNSLNLPIHSSESKITHKNEEIECLQFKTQLVDCIAFFPNSRVLKVSRDRFLPLRTCKDLFLLKSTLYDLDSNGTFNLYPLKFGLLPSIDLGDEFATYETFKIGVPDIPNILELEHLTVMGNVFFGRNITLKGTVIIICDENDVITVPDGSILENVTIWHKSQLEDMNGY.

Residues 105 to 108 (LTGK), Gln181, Gly211, and Asp242 contribute to the UTP site. 107 to 108 (GK) lines the substrate pocket. 240–242 (NVD) lines the substrate pocket.

It belongs to the UDPGP type 1 family.

It carries out the reaction alpha-D-glucose 1-phosphate + UTP + H(+) = UDP-alpha-D-glucose + diphosphate. Functionally, plays a central role as a glucosyl donor in cellular metabolic pathways. In Saccharomyces cerevisiae (strain ATCC 204508 / S288c) (Baker's yeast), this protein is Probable UTP--glucose-1-phosphate uridylyltransferase.